The primary structure comprises 349 residues: GMP reductase (349 aa).

108–131 (IDFLKIKKIFLLSSELKYICIDVA) lines the NADP(+) pocket. Gly181 and Gly183 together coordinate K(+). Cys186 (thioimidate intermediate) is an active-site residue. 216–239 (IISDGGCTVSGDIAKAFGGGADFV) contributes to the NADP(+) binding site.

It belongs to the IMPDH/GMPR family. GuaC type 1 subfamily. Homotetramer.

The catalysed reaction is IMP + NH4(+) + NADP(+) = GMP + NADPH + 2 H(+). Catalyzes the irreversible NADPH-dependent deamination of GMP to IMP. It functions in the conversion of nucleobase, nucleoside and nucleotide derivatives of G to A nucleotides, and in maintaining the intracellular balance of A and G nucleotides. In Buchnera aphidicola subsp. Acyrthosiphon pisum (strain 5A), this protein is GMP reductase.